A 205-amino-acid chain; its full sequence is D-alanine--D-alanine ligase (205 aa).

In terms of domain architecture, ATP-grasp spans lysine 111–phenylalanine 205. Methionine 139–valine 190 contacts ATP.

Belongs to the D-alanine--D-alanine ligase family. The cofactor is Mg(2+). Mn(2+) serves as cofactor.

Its subcellular location is the cytoplasm. It carries out the reaction 2 D-alanine + ATP = D-alanyl-D-alanine + ADP + phosphate + H(+). Its pathway is cell wall biogenesis; peptidoglycan biosynthesis. Its function is as follows. Cell wall formation. This Anaplasma centrale protein is D-alanine--D-alanine ligase (ddl).